The following is a 317-amino-acid chain: Ribose-phosphate pyrophosphokinase (317 aa).

ATP contacts are provided by residues 43-45 (DGE) and 102-103 (RQ). Mg(2+) is bound by residues H136 and D175. Residue K198 is part of the active site. D-ribose 5-phosphate contacts are provided by residues R200, D224, and 228–232 (DTAGT).

The protein belongs to the ribose-phosphate pyrophosphokinase family. Class I subfamily. Homohexamer. Mg(2+) serves as cofactor.

The protein localises to the cytoplasm. The catalysed reaction is D-ribose 5-phosphate + ATP = 5-phospho-alpha-D-ribose 1-diphosphate + AMP + H(+). It participates in metabolic intermediate biosynthesis; 5-phospho-alpha-D-ribose 1-diphosphate biosynthesis; 5-phospho-alpha-D-ribose 1-diphosphate from D-ribose 5-phosphate (route I): step 1/1. In terms of biological role, involved in the biosynthesis of the central metabolite phospho-alpha-D-ribosyl-1-pyrophosphate (PRPP) via the transfer of pyrophosphoryl group from ATP to 1-hydroxyl of ribose-5-phosphate (Rib-5-P). The sequence is that of Ribose-phosphate pyrophosphokinase from Bacillus anthracis.